We begin with the raw amino-acid sequence, 426 residues long: Serine--tRNA ligase (426 aa).

Residue threonine 233–glutamate 235 coordinates L-serine. Residue arginine 264–glutamate 266 coordinates ATP. An L-serine-binding site is contributed by glutamate 287. Glutamate 351–serine 354 contributes to the ATP binding site. L-serine is bound at residue serine 387.

This sequence belongs to the class-II aminoacyl-tRNA synthetase family. Type-1 seryl-tRNA synthetase subfamily. Homodimer. The tRNA molecule binds across the dimer.

The protein resides in the cytoplasm. The enzyme catalyses tRNA(Ser) + L-serine + ATP = L-seryl-tRNA(Ser) + AMP + diphosphate + H(+). The catalysed reaction is tRNA(Sec) + L-serine + ATP = L-seryl-tRNA(Sec) + AMP + diphosphate + H(+). It functions in the pathway aminoacyl-tRNA biosynthesis; selenocysteinyl-tRNA(Sec) biosynthesis; L-seryl-tRNA(Sec) from L-serine and tRNA(Sec): step 1/1. Its function is as follows. Catalyzes the attachment of serine to tRNA(Ser). Is also able to aminoacylate tRNA(Sec) with serine, to form the misacylated tRNA L-seryl-tRNA(Sec), which will be further converted into selenocysteinyl-tRNA(Sec). The protein is Serine--tRNA ligase of Pseudomonas syringae pv. tomato (strain ATCC BAA-871 / DC3000).